The chain runs to 681 residues: DNA ligase (681 aa).

NAD(+) contacts are provided by residues 34-38 (DEEYD), 83-84 (SL), and Glu112. The N6-AMP-lysine intermediate role is filled by Lys114. NAD(+) is bound by residues Arg135, Glu169, Lys285, and Lys309. Residues Cys403, Cys406, Cys422, and Cys427 each coordinate Zn(2+). Positions 584–673 (TTSNILDGLT…GVELKESWKK (90 aa)) constitute a BRCT domain.

Belongs to the NAD-dependent DNA ligase family. LigA subfamily. Mg(2+) serves as cofactor. It depends on Mn(2+) as a cofactor.

The enzyme catalyses NAD(+) + (deoxyribonucleotide)n-3'-hydroxyl + 5'-phospho-(deoxyribonucleotide)m = (deoxyribonucleotide)n+m + AMP + beta-nicotinamide D-nucleotide.. In terms of biological role, DNA ligase that catalyzes the formation of phosphodiester linkages between 5'-phosphoryl and 3'-hydroxyl groups in double-stranded DNA using NAD as a coenzyme and as the energy source for the reaction. It is essential for DNA replication and repair of damaged DNA. The polypeptide is DNA ligase (Fervidobacterium nodosum (strain ATCC 35602 / DSM 5306 / Rt17-B1)).